Reading from the N-terminus, the 63-residue chain is Adipokinetic prohormone type 1 (63 aa).

Positions 1-22 (MVQRCLVVALLVVVVAAALCSA) are cleaved as a signal peptide. At Q23 the chain carries Pyrrolidone carboxylic acid. Threonine amide is present on T32.

This sequence belongs to the AKH/HRTH/RPCH family. As to quaternary structure, adipokinetic hormone precursor-related peptide (APRP) can form three type of disulfide-bond dimers: p1 (alpha-alpha), p2 (alpha-beta), and p3 (beta-beta).

The protein resides in the secreted. Its function is as follows. This hormone, released from cells in the corpora cardiaca, causes release of diglycerides from the fat body and stimulation of muscles to use these diglycerides as an energy source during energy-demanding processes. This is Adipokinetic prohormone type 1 from Schistocerca nitens (Vagrant locust).